A 231-amino-acid chain; its full sequence is MTADDRIKLEPSWKEALRAEFDQPYMTELRTFLQQERAAGKEIYPPGPMIFNALNSTPLDKVKVVILGQDPYHGPGQAHGLCFSVQPGVPAPPSLVNIYKELKRDLNIDIPNHGYLQSWADQGVLMLNTTMTVERANANAHKDKGWQFFTDRIIEVVSQKQPHLVFMLWGAHAQSKQKLIDATKHLVLTSVHPSPLSAYRGFLGCGHFSRTNKFLEQNGEAPIEWRLPPVV.

Asp-70 serves as the catalytic Proton acceptor.

Belongs to the uracil-DNA glycosylase (UDG) superfamily. UNG family.

Its subcellular location is the cytoplasm. It catalyses the reaction Hydrolyzes single-stranded DNA or mismatched double-stranded DNA and polynucleotides, releasing free uracil.. Functionally, excises uracil residues from the DNA which can arise as a result of misincorporation of dUMP residues by DNA polymerase or due to deamination of cytosine. This chain is Uracil-DNA glycosylase, found in Pseudomonas fluorescens (strain Pf0-1).